A 1357-amino-acid polypeptide reads, in one-letter code: DNA-directed RNA polymerase subunit beta (1357 aa).

This sequence belongs to the RNA polymerase beta chain family. As to quaternary structure, the RNAP catalytic core consists of 2 alpha, 1 beta, 1 beta' and 1 omega subunit. When a sigma factor is associated with the core the holoenzyme is formed, which can initiate transcription.

The enzyme catalyses RNA(n) + a ribonucleoside 5'-triphosphate = RNA(n+1) + diphosphate. Functionally, DNA-dependent RNA polymerase catalyzes the transcription of DNA into RNA using the four ribonucleoside triphosphates as substrates. The sequence is that of DNA-directed RNA polymerase subunit beta from Pseudomonas entomophila (strain L48).